Consider the following 529-residue polypeptide: Bifunctional purine biosynthesis protein PurH (529 aa).

One can recognise an MGS-like domain in the interval 1-148 (MQQRRPVRRA…KNHKDVAIVV (148 aa)).

Belongs to the PurH family.

The catalysed reaction is (6R)-10-formyltetrahydrofolate + 5-amino-1-(5-phospho-beta-D-ribosyl)imidazole-4-carboxamide = 5-formamido-1-(5-phospho-D-ribosyl)imidazole-4-carboxamide + (6S)-5,6,7,8-tetrahydrofolate. It carries out the reaction IMP + H2O = 5-formamido-1-(5-phospho-D-ribosyl)imidazole-4-carboxamide. The protein operates within purine metabolism; IMP biosynthesis via de novo pathway; 5-formamido-1-(5-phospho-D-ribosyl)imidazole-4-carboxamide from 5-amino-1-(5-phospho-D-ribosyl)imidazole-4-carboxamide (10-formyl THF route): step 1/1. Its pathway is purine metabolism; IMP biosynthesis via de novo pathway; IMP from 5-formamido-1-(5-phospho-D-ribosyl)imidazole-4-carboxamide: step 1/1. The polypeptide is Bifunctional purine biosynthesis protein PurH (Salmonella agona (strain SL483)).